Consider the following 2664-residue polypeptide: Inositol 1,4,5-trisphosphate-gated calcium channel ITPR3 (2664 aa).

Residues 1 to 2227 are Cytoplasmic-facing; sequence MSEMSSFLHI…YVEGASTGVL (2227 aa). 5 MIR domains span residues 113 to 173, 174 to 224, 232 to 288, 295 to 372, and 378 to 434; these read GDVV…LRSN, GDNV…INLF, EEVL…VEVV, GGAG…LDPT, and DSFV…IVSV. Arg-266, Thr-268, Leu-269, and Arg-270 together coordinate 1D-myo-inositol 1,4,5-trisphosphate. Residues 320–344 are disordered; the sequence is NPSYKGDASDPKAAGTGAQGRTGRR. Residues Arg-503, Lys-507, Arg-510, Tyr-567, Arg-568, and Lys-569 each coordinate 1D-myo-inositol 1,4,5-trisphosphate. Arg-743 contributes to the Ca(2+) binding site. Phosphoserine is present on residues Ser-909 and Ser-927. Ca(2+) is bound by residues Glu-1115 and Glu-1118. Disordered stretches follow at residues 1124–1158 and 1790–1850; these read KGAS…GEKS and QQET…VGER. Positions 1792–1805 are enriched in polar residues; it reads ETKSTVAVNMSDLG. A phosphoserine mark is found at Ser-1806, Ser-1825, and Ser-1827. The Ca(2+) site is built by Glu-1875 and Glu-1939. ATP-binding residues include Ala-1989, Glu-2142, and Lys-2145. The chain crosses the membrane as a helical span at residues 2228-2248; that stretch reads GSPLISLLFWILICFSIAALF. The Extracellular segment spans residues 2249 to 2256; the sequence is TKRYSVRP. The chain crosses the membrane as a helical span at residues 2257–2277; that stretch reads LIVALILRSIYYLGIGPTLNI. At 2278-2286 the chain is on the cytoplasmic side; that stretch reads LGALNLTNK. A helical membrane pass occupies residues 2287–2304; it reads IVFVVSFVGNRGTFIRGY. Residues 2305–2318 lie on the Extracellular side of the membrane; the sequence is KAMVMDMEFLYHVG. A helical membrane pass occupies residues 2319 to 2339; that stretch reads YILTSVLGLFAHELFYSILLF. Residues 2340 to 2361 are Cytoplasmic-facing; that stretch reads DLIYREETLFNVIKSVTRNGRS. The chain crosses the membrane as a helical span at residues 2362-2382; the sequence is ILLTALLALILVYLFSIVGFL. The Extracellular segment spans residues 2383-2489; it reads FLKDDFILEV…ESLFPARVVY (107 aa). A disulfide bridge links Cys-2448 with Cys-2454. Residues 2490-2510 traverse the membrane as a helical segment; sequence DLLFFFIVIIIVLNLIFGVII. The Cytoplasmic portion of the chain corresponds to 2511 to 2664; that stretch reads DTFADLRSEK…FVDVQNCMSR (154 aa). Residues Cys-2531 and Phe-2532 each contribute to the ATP site. Residue Cys-2531 participates in Zn(2+) binding. Residues Cys-2534 and His-2551 each coordinate Zn(2+). Residues Lys-2553, His-2556, Asn-2557, and Met-2558 each contribute to the ATP site. His-2556 serves as a coordination point for Zn(2+). Position 2574 (Thr-2574) interacts with Ca(2+). Residues Ser-2602 and Ser-2663 each carry the phosphoserine modification.

It belongs to the InsP3 receptor family. In terms of assembly, homotetramer. Homodimer. Interacts with TRPC1, TRPC3 and TRPC4. Interacts with TRPV4. Interacts with SIGMAR1. Interacts with PML and AKT1. Interacts with IRAG2 (via coiled-coil domain). Interacts with CABP1. Interacts with TMBIM4/LFG4. Interacts with CEMIP. Interacts with TESPA1. Interacts with TMEM203. Interacts with BOK; regulates ITPR3 expression. Interacts with BCL2L10. Interacts with CHGA and CHGB. Post-translationally, phosphorylated by AKT1 on serine and/or threonine residues.

Its subcellular location is the endoplasmic reticulum membrane. It localises to the cytoplasmic vesicle. It is found in the secretory vesicle membrane. The enzyme catalyses Ca(2+)(in) = Ca(2+)(out). With respect to regulation, inositol 1,4,5-trisphosphate-gated calcium channel is regulated by cytosolic calcium in a biphasic manner. At low concentrations, cytosolic calcium binds at a high-affinity juxtamembrane domain (JD) calcium binding site, allowing ITPR3 to activate by escaping a low-energy resting state through an ensemble of preactivated states. At high cytosolic calcium concentrations, ITPR3 preferentially enters an inhibited state stabilized by calcium binding at a second, low-affinity cytoplasmic domain (CD) calcium binding site. Functionally, inositol 1,4,5-trisphosphate-gated calcium channel that, upon 1D-myo-inositol 1,4,5-trisphosphate binding, transports calcium from the endoplasmic reticulum lumen to cytoplasm, thus releasing the intracellular calcium and therefore participates in cellular calcium ion homeostasis. 1D-myo-inositol 1,4,5-trisphosphate binds to the ligand-free channel without altering its global conformation, yielding the low-energy resting state, then progresses through resting-to preactivated transitions to the higher energy preactivated state, which increases affinity for calcium, promoting binding of the low basal cytosolic calcium at the juxtamembrane domain (JD) site, favoring the transition through the ensemble of high-energy intermediate states along the trajectory to the fully-open activated state. Upon opening, releases calcium in the cytosol where it can bind to the low-affinity cytoplasmic domain (CD) site and stabilizes the inhibited state to terminate calcium release. The chain is Inositol 1,4,5-trisphosphate-gated calcium channel ITPR3 from Bos taurus (Bovine).